The chain runs to 62 residues: Protein DsrB (62 aa).

It belongs to the DsrB family.

This Shigella boydii serotype 18 (strain CDC 3083-94 / BS512) protein is Protein DsrB.